A 363-amino-acid polypeptide reads, in one-letter code: Serine/threonine-protein kinase SRK2A (363 aa).

The Protein kinase domain occupies 4–260 (YELVKDIGAG…IAEIKKHSWF (257 aa)). ATP-binding positions include 10–18 (IGAGNFGVA) and Lys-33. The active-site Proton acceptor is Asp-123. Positions 306 to 363 (SRSIGGFGWGGNGDADGKEEDAEDVEEEEEEVEEEEDDEDEYDKTVKEVHASGEVRIS) are disordered. Over residues 310-319 (GGFGWGGNGD) the composition is skewed to gly residues. Acidic residues predominate over residues 322–347 (GKEEDAEDVEEEEEEVEEEEDDEDEY). The span at 348–363 (DKTVKEVHASGEVRIS) shows a compositional bias: basic and acidic residues.

This sequence belongs to the protein kinase superfamily. Ser/Thr protein kinase family. In terms of assembly, interacts with TOPP1. In terms of tissue distribution, expressed in seedlings.

The catalysed reaction is L-seryl-[protein] + ATP = O-phospho-L-seryl-[protein] + ADP + H(+). It catalyses the reaction L-threonyl-[protein] + ATP = O-phospho-L-threonyl-[protein] + ADP + H(+). The protein is Serine/threonine-protein kinase SRK2A (SRK2A) of Arabidopsis thaliana (Mouse-ear cress).